Consider the following 142-residue polypeptide: Large ribosomal subunit protein uL13 (142 aa).

Belongs to the universal ribosomal protein uL13 family. Part of the 50S ribosomal subunit.

This protein is one of the early assembly proteins of the 50S ribosomal subunit, although it is not seen to bind rRNA by itself. It is important during the early stages of 50S assembly. The sequence is that of Large ribosomal subunit protein uL13 from Leptothrix cholodnii (strain ATCC 51168 / LMG 8142 / SP-6) (Leptothrix discophora (strain SP-6)).